The sequence spans 433 residues: Adenosylhomocysteinase A (433 aa).

Substrate is bound by residues T57, D132, E157, K187, and D191. The NAD binding stretch occupies residues 184 to 351 (SVTKSKFDNL…EGRLVNLGCA (168 aa)).

This sequence belongs to the adenosylhomocysteinase family. Homotetramer. NAD(+) serves as cofactor.

The protein localises to the cytoplasm. The catalysed reaction is S-adenosyl-L-homocysteine + H2O = L-homocysteine + adenosine. It functions in the pathway amino-acid biosynthesis; L-homocysteine biosynthesis; L-homocysteine from S-adenosyl-L-homocysteine: step 1/1. Functionally, catalyzes the hydrolysis of S-adenosyl-L-homocysteine to form adenosine and homocysteine. Binds copper ions. The polypeptide is Adenosylhomocysteinase A (ahcy-a) (Xenopus laevis (African clawed frog)).